We begin with the raw amino-acid sequence, 3470 residues long: Mucin-4 (3470 aa).

The first 28 residues, 1–28, serve as a signal peptide directing secretion; it reads MRGPHWRVPWLCLSCLYSCLLLLPDALA. The segment at 32-163 is disordered; that stretch reads TQTPMSLSSS…STESTSVDSG (132 aa). Positions 37–57 are enriched in low complexity; that stretch reads SLSSSTRTSQMSSQASTSSTS. O-linked (GalNAc...) threonine glycosylation is found at T42, T44, T65, T68, T87, T91, T96, T97, T98, T99, T100, T103, T104, T106, T117, T130, T131, T132, T145, T146, T150, T151, T152, and T155. The interval 43–2501 is variable number of tandem repeats (VNTR); sequence RTSQMSSQAS…ETLINDFTSS (2459 aa). A compositionally biased stretch (polar residues) spans 66–85; the sequence is EQTSTRDTPSSITTVSQSHH. Positions 86 to 111 are enriched in low complexity; it reads TTSMETSKPQTTTTTEVTTSTPSASS. The span at 112–129 shows a compositional bias: polar residues; sequence RDQIQTETSSQRTISPDG. The segment covering 130 to 162 has biased composition (low complexity); it reads TTTSHAPSISSSAPSTTHMLTTTSSTESTSVDS. N-linked (GlcNAc...) asparagine glycosylation is present at N188. Residues 199 to 220 are compositionally biased toward polar residues; sequence TLTQRQHTGSKQTSSKSQVNIV. Disordered stretches follow at residues 199-679, 691-925, 938-1219, 1232-1400, 1413-1524, 1537-1647, and 1660-1992; these read TLTQ…STVS, FPQS…NMST, TLPQ…MSTV, LPQS…MSTV, LPKS…NMST, and TLPQ…TEIT. Residues 221–232 are compositionally biased toward low complexity; sequence TSTLSTSTSDST. Residues 233–243 are compositionally biased toward polar residues; the sequence is PAQTMSQVTSS. O-linked (GalNAc...) threonine glycans are attached at residues T236 and T241. The segment covering 251–272 has biased composition (low complexity); that stretch reads STSGVSSTSLTTTEVLTQTSST. Polar residues predominate over residues 273–283; the sequence is DSAPGNTTLRI. N-linked (GlcNAc...) asparagine glycans are attached at residues N278 and N286. The segment covering 284–299 has biased composition (low complexity); the sequence is TQNSTTHTTKVSTTST. T297 is a glycosylation site (O-linked (GalNAc...) threonine). The span at 300–335 shows a compositional bias: polar residues; sequence PQKLSPVSTLINSSQKMSTLPQNQHTESMDTSRQPQ. N311 is a glycosylation site (N-linked (GlcNAc...) asparagine). Positions 336 to 346 are enriched in low complexity; that stretch reads TTTTIEVTTST. A compositionally biased stretch (polar residues) spans 347–448; the sequence is PSASSLHQIQ…LTSSYSQHIQ (102 aa). O-linked (GalNAc...) threonine glycans are attached at residues T357, T370, T371, T372, T385, and T423. Over residues 449 to 470 the composition is skewed to low complexity; that stretch reads SKGTSSKSQTTTNTKVNTSTPS. N465 carries N-linked (GlcNAc...) asparagine glycosylation. The segment covering 479–489 has biased composition (polar residues); sequence TETSSQRTNSP. Residue T494 is glycosylated (O-linked (GalNAc...) threonine). Low complexity predominate over residues 496-510; the sequence is HAPSMSSSAPSTTHM. Positions 511–577 are enriched in polar residues; the sequence is LSTTSSNQST…SQSQHTGSKG (67 aa). Residue T513 is glycosylated (O-linked (GalNAc...) threonine). Residue N517 is glycosylated (N-linked (GlcNAc...) asparagine). Residues T542 and T545 are each glycosylated (O-linked (GalNAc...) threonine). An N-linked (GlcNAc...) asparagine glycan is attached at N550. T551, T584, T585, T586, T587, T588, T592, T594, T599, T605, T618, T619, T620, T633, T634, T639, T640, and T655 each carry an O-linked (GalNAc...) threonine glycan. Positions 578 to 599 are enriched in low complexity; sequence TSSNPQTTTTTEVTTSTPSATT. Over residues 600-631 the composition is skewed to polar residues; it reads HDQIQTETSSQNTISPGETTTSYAPIMSSSAP. The span at 632 to 647 shows a compositional bias: low complexity; the sequence is STTHMLSTTSSTQSTS. Composition is skewed to polar residues over residues 653–679 and 691–701; these read TTTL…STVS and FPQSQHTGSKG. The N-linked (GlcNAc...) asparagine glycan is linked to N674. Residues T702, T708, T709, T710, T711, and T716 are each glycosylated (O-linked (GalNAc...) threonine). Residues 702–723 show a composition bias toward low complexity; it reads TSSNPQTTTTPVVTTSNPSATS. N718 carries an N-linked (GlcNAc...) asparagine glycan. The span at 724 to 741 shows a compositional bias: polar residues; sequence RDQIQTETSSQRTISPGE. A compositionally biased stretch (low complexity) spans 742–772; sequence TTTSYASIMSSSAPSTTHMLTTTSSTQSTSV. 4 O-linked (GalNAc...) threonine glycosylation sites follow: T743, T744, T757, and T758. Residues 780-824 are compositionally biased toward polar residues; sequence VRTQGSTPATTQVSPSSQNMSTVSTPITSTQILSTLPQSQHTGSK. Residue N798 is glycosylated (N-linked (GlcNAc...) asparagine). Positions 825–848 are enriched in low complexity; it reads GTSSNPQTTTSPVVTTSTPSGTSG. Residues T826, T832, T833, T834, T839, T840, T842, T846, and T853 are each glycosylated (O-linked (GalNAc...) threonine). Positions 849-879 are enriched in polar residues; sequence DQIQTETSSQRTISPGKTTTSHALNINSSAP. Residue N875 is glycosylated (N-linked (GlcNAc...) asparagine). Positions 880–895 are enriched in low complexity; it reads STTHMLSTTSSTQSTS. Residues T901 and T902 are each glycosylated (O-linked (GalNAc...) threonine). The segment covering 901–925 has biased composition (polar residues); sequence TTAGRTQGSTPATTQVSPSSQNMST. N922 carries N-linked (GlcNAc...) asparagine glycosylation. The span at 948–968 shows a compositional bias: low complexity; sequence KSTSTNPQTTTTPEVTTSNPS. O-linked (GalNAc...) threonine glycosylation is found at T950, T952, T956, T957, T958, T959, T963, and T964. An N-linked (GlcNAc...) asparagine glycan is attached at N966. Over residues 969-1003 the composition is skewed to polar residues; it reads ATSHDQIETETSSQRTISPGETTTSYAPIMSSSAP. T990, T991, T992, T1005, T1006, T1011, T1012, and T1015 each carry an O-linked (GalNAc...) threonine glycan. Positions 1004–1019 are enriched in low complexity; the sequence is STTHMLSTTSSTQSTS. Positions 1020–1065 are enriched in polar residues; the sequence is VDTRNTTTLTTQGSTPATTQVSPSSKNMSTVSTPITSTHKLSTLPQ. N-linked (GlcNAc...) asparagine glycosylation is present at N1024. T1025, T1026, T1027, T1029, and T1038 each carry an O-linked (GalNAc...) threonine glycan. 3 N-linked (GlcNAc...) asparagine glycosylation sites follow: N1046, N1072, and N1091. The span at 1066–1083 shows a compositional bias: low complexity; that stretch reads SQHTGSNGTSSSSSTPAT. The segment covering 1091–1120 has biased composition (polar residues); the sequence is NMSTVSTPITTTHKLSTLSQSQHTGSKGTS. A compositionally biased stretch (low complexity) spans 1121–1140; that stretch reads SNPQTTTTPVMTTSTPSATT. Residues T1125, T1126, T1127, T1128, T1132, T1133, T1135, T1140, T1174, T1198, and T1207 are each glycosylated (O-linked (GalNAc...) threonine). Polar residues-rich tracts occupy residues 1141–1219 and 1232–1242; these read HDQI…MSTV and LPQSQHTGSKG. N1215 is a glycosylation site (N-linked (GlcNAc...) asparagine). 20 O-linked (GalNAc...) threonine glycosylation sites follow: T1243, T1245, T1249, T1250, T1251, T1252, T1256, T1257, T1259, T1263, T1270, T1283, T1284, T1285, T1298, T1299, T1304, T1305, T1318, and T1319. The span at 1243–1264 shows a compositional bias: low complexity; sequence TSTNPQTTTTPEVTTSTPSATS. The span at 1265–1296 shows a compositional bias: polar residues; it reads RDQIQTETSSQRTISPGETTTSHAPIMSSSAP. Residues 1297–1312 show a composition bias toward low complexity; that stretch reads STTHMLSTTSSTQSTS. Polar residues predominate over residues 1318–1353; the sequence is TTAGRTQGSTPATTQVSPSSQNMTTTSHALMSSSAP. The N-linked (GlcNAc...) asparagine glycan is linked to N1339. T1341, T1342, T1355, T1356, T1365, T1368, T1372, T1375, T1376, T1377, and T1379 each carry an O-linked (GalNAc...) threonine glycan. Over residues 1354-1390 the composition is skewed to low complexity; the sequence is STTHMLSTTSSTQSTSVDTRHTTTVTTQGSTPATTQV. 2 stretches are compositionally biased toward polar residues: residues 1391 to 1400 and 1413 to 1477; these read LPSSQNMSTV and LPQS…SSAP. N1396 is a glycosylation site (N-linked (GlcNAc...) asparagine). Residues T1426, T1430, T1431, T1440, T1451, T1453, T1464, T1465, and T1466 are each glycosylated (O-linked (GalNAc...) threonine). N-linked (GlcNAc...) asparagine glycosylation occurs at N1471. Residues 1478 to 1489 are compositionally biased toward low complexity; sequence STTHMLSSTSST. T1479, T1480, T1499, and T1512 each carry an O-linked (GalNAc...) threonine glycan. 2 stretches are compositionally biased toward polar residues: residues 1490 to 1524 and 1537 to 1553; these read QITS…MSTV and LPKS…SNPQ. An N-linked (GlcNAc...) asparagine glycan is attached at N1520. T1554, T1555, T1557, and T1562 each carry an O-linked (GalNAc...) threonine glycan. The span at 1554–1569 shows a compositional bias: low complexity; the sequence is TTITPVVTTSTPSASS. A compositionally biased stretch (polar residues) spans 1570–1587; the sequence is RDQIQTETSFQRTISPGE. Residues T1588, T1589, T1590, T1604, T1609, T1627, T1635, and T1636 are each glycosylated (O-linked (GalNAc...) threonine). A compositionally biased stretch (low complexity) spans 1588–1609; it reads TTTSHAPSMSSSAPSSTHMLST. Positions 1610-1647 are enriched in polar residues; it reads ASSTQITSVDTRHTTAITTQGSTPATTQVSPSSQNMST. N1644 carries N-linked (GlcNAc...) asparagine glycosylation. Over residues 1670–1693 the composition is skewed to low complexity; the sequence is KSTSTNPQTTTTPRVTTSTPSASS. 11 O-linked (GalNAc...) threonine glycosylation sites follow: T1672, T1674, T1678, T1679, T1680, T1681, T1685, T1686, T1688, T1699, and T1714. Positions 1694–1725 are enriched in polar residues; the sequence is RDQIQTETSSQRTISPGKTTTSHVPNMNSSAP. N-linked (GlcNAc...) asparagine glycosylation is present at N1721. Positions 1726–1742 are enriched in low complexity; the sequence is STTHILSTTSSIQSTSG. A compositionally biased stretch (polar residues) spans 1747 to 1837; the sequence is TTAVRTQGST…SSQRTISPGE (91 aa). N-linked (GlcNAc...) asparagine glycosylation is present at N1770. Residues T1838, T1839, T1840, T1854, T1873, T1874, T1888, T1889, and T1891 are each glycosylated (O-linked (GalNAc...) threonine). Low complexity predominate over residues 1838–1859; it reads TTTSHASSLSSSAPSSTHMLST. Residues 1860–1877 show a composition bias toward polar residues; sequence ASSTEITSGDTRHTTAIV. A compositionally biased stretch (low complexity) spans 1878-1895; that stretch reads TQGSTPATTQTTLTPSSQ. N1896 carries N-linked (GlcNAc...) asparagine glycosylation. The segment covering 1896–1927 has biased composition (polar residues); that stretch reads NMSTVSTPITSTHKLSPLPQSQHTENMGTSSN. Low complexity predominate over residues 1928–1945; that stretch reads PQTTTTPEVTTSTPSATS. 11 O-linked (GalNAc...) threonine glycosylation sites follow: T1930, T1931, T1932, T1933, T1937, T1938, T1940, T1964, T1965, T1966, and T1980. The span at 1946-1992 shows a compositional bias: polar residues; it reads YDQIQTETSFQRTISPGETTTSHAPSMSNSAPSSTHKLSTASSTEIT. An N-linked (GlcNAc...) asparagine glycan is attached at N2022. Residues 2037–2055 show a composition bias toward polar residues; the sequence is STLRQSQHTGSKGTSSNHQ. Disordered stretches follow at residues 2037 to 2107, 2139 to 2185, 2205 to 2237, and 2262 to 2368; these read STLR…NTTH, QVSL…NITP, TMSW…ILTS, and TSTS…TVPL. 2 O-linked (GalNAc...) threonine glycosylation sites follow: T2056 and T2057. Over residues 2056 to 2071 the composition is skewed to low complexity; it reads TTTTPVVTTSTSSATS. Residues 2072-2089 show a composition bias toward polar residues; that stretch reads RDQIQTETSSLRTISPDG. T2090, T2091, and T2092 each carry an O-linked (GalNAc...) threonine glycan. Low complexity predominate over residues 2090 to 2107; sequence TTTSHASSMSSSSPNTTH. An N-linked (GlcNAc...) asparagine glycan is attached at N2104. O-linked (GalNAc...) threonine glycosylation is found at T2105 and T2106. N2148, N2182, and N2225 each carry an N-linked (GlcNAc...) asparagine glycan. Composition is skewed to polar residues over residues 2205–2229 and 2262–2303; these read TMSW…TSPA and TSTS…QTSI. O-linked (GalNAc...) threonine glycans are attached at residues T2264, T2352, T2354, T2359, and T2360. Low complexity predominate over residues 2344–2367; it reads TAVSATSSTLTSPSPTTASRSTVP. Residues 2458 to 2613 enclose the NIDO domain; it reads PFWADADFSS…GLQVYRLHRE (156 aa). Residues 2614-2726 form the AMOP domain; that stretch reads ERPNYRLKCL…SFCVWYQLRR (113 aa). Positions 2738-2937 constitute a VWFD domain; that stretch reads RPAWTFGDPH…TWHVNGTGLL (200 aa). N-linked (GlcNAc...) asparagine glycans are attached at residues N2755, N2773, N2801, N2827, N2844, N2853, N2888, N2909, N2916, N2932, N2958, N2985, N3003, N3014, N3054, N3079, N3102, N3109, N3157, and N3174. One can recognise an EGF-like 1 domain in the interval 3173-3212; it reads PNRSCPMNYCYNNGHCDISEAPGCQPTCTCPPAFTDNRCF. Cystine bridges form between C3177/C3188, C3182/C3200, and C3202/C3211. N3240, N3247, and N3353 each carry an N-linked (GlcNAc...) asparagine glycan. Residues 3382–3421 form the EGF-like 2 domain; sequence VSPCSEGYCHNGGQCKHLPDGPQCSCASFTIYSSSGEHCE. 3 cysteine pairs are disulfide-bonded: C3385–C3396, C3390–C3405, and C3407–C3420. The chain crosses the membrane as a helical span at residues 3432-3452; sequence GILFGTLGALLLLGILAFMIF.

In terms of assembly, a heterodimeric complex, composed of a mucin-4 alpha chain and a cysteine-rich transmembrane mucin-4 beta chain. Mucin-4 beta chain interacts with ERBB2 via the EGF-like domain 1. In nonpolarized cells, associates with ERBB2 and ERBB3. Proteolytically cleaved into 2 chains, mucin-4 alpha chain and mucin-4 beta chain. In terms of processing, highly O-glycosylated. Post-translationally, predominantly N-glycosylated. In terms of tissue distribution, expressed in trachea, duodenum and intestine. Lower expression in stomach, salivary glands, liver, gallbladder, and kidney.

It is found in the cell membrane. It localises to the secreted. Functionally, membrane-bound mucin, a family of highly glycosylated proteins that constitute the major component of the mucus, the slimy and viscous secretion covering epithelial surfaces. These glycoproteins play important roles in the protection of the epithelium and are implicated in epithelial renewal and differentiation. Regulates cellular behavior through both anti-adhesive effects on cell-cell and cell-extracellular matrix interactions and its ability to act as an intramembrane ligand for ERBB2. Plays an important role in proliferation and differentiation of epithelial cells by inducing specific phosphorylation of ERBB2. In polarized epithelial cells, segregates ERBB2 and other ERBB receptors and prevents ERBB2 from acting as a coreceptor. The interaction with ERBB2 leads to enhanced expression of CDKN1B. The formation of a MUC4-ERBB2-ERBB3-NRG1 complex leads to down-regulation of CDKN1B, resulting in repression of apoptosis and stimulation of proliferation. Its ability to promote tumor growth may be mainly due to repression of apoptosis as opposed to proliferation. This chain is Mucin-4 (Muc4), found in Mus musculus (Mouse).